The sequence spans 261 residues: MRILITNDDGINAPGLEVLEQIALELAGPEGEVWTVAPAFEQSGVSHAISYTHPMMIAKLGPRRYAAEGSPADCVLAALYDVLQGARPDLVLSGVNRGNNSAENVLYSGTVGGALEAALQGLPAIALSQFLGPETEGLADPFECARTHGARIVRLLLERGLWDGEDYRLFYNVNFPPVPAANLRGHRVAAQGFRRDTSFGVEPHMSPSGRRFLWIRGGAQQSPTLPGTDAAVNLEGFVSITPLRADLTAHDRLAELEALIG.

A divalent metal cation is bound by residues aspartate 8, aspartate 9, serine 43, and asparagine 96.

This sequence belongs to the SurE nucleotidase family. A divalent metal cation serves as cofactor.

The protein resides in the cytoplasm. The enzyme catalyses a ribonucleoside 5'-phosphate + H2O = a ribonucleoside + phosphate. Its function is as follows. Nucleotidase that shows phosphatase activity on nucleoside 5'-monophosphates. The polypeptide is 5'-nucleotidase SurE (Cereibacter sphaeroides (strain ATCC 17023 / DSM 158 / JCM 6121 / CCUG 31486 / LMG 2827 / NBRC 12203 / NCIMB 8253 / ATH 2.4.1.) (Rhodobacter sphaeroides)).